A 315-amino-acid chain; its full sequence is Cytochrome bo(3) ubiquinol oxidase subunit 2 (315 aa).

An N-terminal signal peptide occupies residues 1–24; sequence MRLRKYNKSLGWLSLFAGTVLLSG. The N-palmitoyl cysteine moiety is linked to residue cysteine 25. A lipid anchor (S-diacylglycerol cysteine) is attached at cysteine 25. Residues 25-50 lie on the Periplasmic side of the membrane; sequence CNSALLDPKGQIGLEQRSLILTAFGL. Residues 51 to 68 form a helical membrane-spanning segment; that stretch reads MLIVVIPAILMAVGFAWK. At 69-92 the chain is on the cytoplasmic side; the sequence is YRASNKDAKYSPNWSHSNKVEAVV. A helical transmembrane segment spans residues 93-111; sequence WTVPILIIIFLAVLTWKTT. The Periplasmic portion of the chain corresponds to 112 to 315; sequence HALEPSKPLA…MDMSHAESAH (204 aa). The interval 288-315 is disordered; sequence MDMTQPEGEHSAHEGMEGMDMSHAESAH. A compositionally biased stretch (basic and acidic residues) spans 294–315; that stretch reads EGEHSAHEGMEGMDMSHAESAH.

Belongs to the cytochrome c oxidase subunit 2 family. Heterooctamer of two A chains, two B chains, two C chains and two D chains.

It is found in the cell inner membrane. Its function is as follows. Cytochrome bo(3) ubiquinol terminal oxidase is the component of the aerobic respiratory chain of E.coli that predominates when cells are grown at high aeration. Has proton pump activity across the membrane in addition to electron transfer, pumping 2 protons/electron. The polypeptide is Cytochrome bo(3) ubiquinol oxidase subunit 2 (cyoA) (Escherichia coli O6:H1 (strain CFT073 / ATCC 700928 / UPEC)).